A 319-amino-acid polypeptide reads, in one-letter code: Lipoyl synthase (319 aa).

Over residues 1–12 (MVTIVDTLSNTP) the composition is skewed to polar residues. The segment at 1 to 32 (MVTIVDTLSNTPLRPRHPEKANRPDSISPAKP) is disordered. [4Fe-4S] cluster contacts are provided by Cys61, Cys66, Cys72, Cys87, Cys91, Cys94, and Ser300. The region spanning 73–289 (WDKKHATFMI…ETVAYTKGFL (217 aa)) is the Radical SAM core domain.

This sequence belongs to the radical SAM superfamily. Lipoyl synthase family. The cofactor is [4Fe-4S] cluster.

Its subcellular location is the cytoplasm. The catalysed reaction is [[Fe-S] cluster scaffold protein carrying a second [4Fe-4S](2+) cluster] + N(6)-octanoyl-L-lysyl-[protein] + 2 oxidized [2Fe-2S]-[ferredoxin] + 2 S-adenosyl-L-methionine + 4 H(+) = [[Fe-S] cluster scaffold protein] + N(6)-[(R)-dihydrolipoyl]-L-lysyl-[protein] + 4 Fe(3+) + 2 hydrogen sulfide + 2 5'-deoxyadenosine + 2 L-methionine + 2 reduced [2Fe-2S]-[ferredoxin]. Its pathway is protein modification; protein lipoylation via endogenous pathway; protein N(6)-(lipoyl)lysine from octanoyl-[acyl-carrier-protein]: step 2/2. Catalyzes the radical-mediated insertion of two sulfur atoms into the C-6 and C-8 positions of the octanoyl moiety bound to the lipoyl domains of lipoate-dependent enzymes, thereby converting the octanoylated domains into lipoylated derivatives. In Bradyrhizobium sp. (strain BTAi1 / ATCC BAA-1182), this protein is Lipoyl synthase.